Here is a 206-residue protein sequence, read N- to C-terminus: Reticulon-like protein B13 (206 aa).

In terms of domain architecture, Reticulon spans 16–206 (VEDIYLWRRK…GTEEKVKKSE (191 aa)). A run of 3 helical transmembrane segments spans residues 27 to 47 (LAFS…FYGF), 50 to 70 (ITIV…WGSL), and 134 to 154 (IGNL…GLTV).

The protein resides in the endoplasmic reticulum membrane. The protein is Reticulon-like protein B13 (RTNLB13) of Arabidopsis thaliana (Mouse-ear cress).